Here is a 421-residue protein sequence, read N- to C-terminus: CinA-like protein (421 aa).

Belongs to the CinA family.

The sequence is that of CinA-like protein from Myxococcus xanthus (strain DK1622).